A 163-amino-acid polypeptide reads, in one-letter code: Transcriptional repressor NrdR (163 aa).

The segment at 3-34 (CPKCNYLKSSVVDSRQAEEGNTIRRRRECENC) is a zinc-finger region. Residues 49 to 139 (LLVVKKDGTR…VYRSFKDVDE (91 aa)) enclose the ATP-cone domain.

It belongs to the NrdR family. Zn(2+) serves as cofactor.

Its function is as follows. Negatively regulates transcription of bacterial ribonucleotide reductase nrd genes and operons by binding to NrdR-boxes. The polypeptide is Transcriptional repressor NrdR (Streptococcus mutans serotype c (strain ATCC 700610 / UA159)).